We begin with the raw amino-acid sequence, 286 residues long: ATP synthase gamma chain (286 aa).

It belongs to the ATPase gamma chain family. In terms of assembly, F-type ATPases have 2 components, CF(1) - the catalytic core - and CF(0) - the membrane proton channel. CF(1) has five subunits: alpha(3), beta(3), gamma(1), delta(1), epsilon(1). CF(0) has three main subunits: a, b and c.

It localises to the cell inner membrane. Produces ATP from ADP in the presence of a proton gradient across the membrane. The gamma chain is believed to be important in regulating ATPase activity and the flow of protons through the CF(0) complex. The polypeptide is ATP synthase gamma chain (Dechloromonas aromatica (strain RCB)).